The sequence spans 92 residues: Small ribosomal subunit protein uS19c (92 aa).

It belongs to the universal ribosomal protein uS19 family.

The protein resides in the plastid. The protein localises to the chloroplast. Protein S19 forms a complex with S13 that binds strongly to the 16S ribosomal RNA. In Populus alba (White poplar), this protein is Small ribosomal subunit protein uS19c.